The chain runs to 618 residues: DNA mismatch repair protein MutL (618 aa).

Residues 366–381 are compositionally biased toward low complexity; the sequence is AEPTAAREPATPRYSG. The tract at residues 366–403 is disordered; it reads AEPTAAREPATPRYSGGASGGNGGRQSAGGWPHAQPGY. Over residues 382–392 the composition is skewed to gly residues; that stretch reads GASGGNGGRQS.

The protein belongs to the DNA mismatch repair MutL/HexB family.

Functionally, this protein is involved in the repair of mismatches in DNA. It is required for dam-dependent methyl-directed DNA mismatch repair. May act as a 'molecular matchmaker', a protein that promotes the formation of a stable complex between two or more DNA-binding proteins in an ATP-dependent manner without itself being part of a final effector complex. The sequence is that of DNA mismatch repair protein MutL from Salmonella schwarzengrund (strain CVM19633).